A 448-amino-acid chain; its full sequence is Phosphoglucosamine mutase (448 aa).

Catalysis depends on serine 100, which acts as the Phosphoserine intermediate. Residues serine 100, aspartate 240, aspartate 242, and aspartate 244 each coordinate Mg(2+). Serine 100 carries the phosphoserine modification.

This sequence belongs to the phosphohexose mutase family. Mg(2+) is required as a cofactor. Post-translationally, activated by phosphorylation.

It catalyses the reaction alpha-D-glucosamine 1-phosphate = D-glucosamine 6-phosphate. Catalyzes the conversion of glucosamine-6-phosphate to glucosamine-1-phosphate. In Clostridium acetobutylicum (strain ATCC 824 / DSM 792 / JCM 1419 / IAM 19013 / LMG 5710 / NBRC 13948 / NRRL B-527 / VKM B-1787 / 2291 / W), this protein is Phosphoglucosamine mutase.